Consider the following 50-residue polypeptide: Photosystem II reaction center protein M (50 aa).

The chain crosses the membrane as a helical span at residues 7-27; it reads GFIASLLFVGVPTIFLIGLFI.

Belongs to the PsbM family. As to quaternary structure, PSII is composed of 1 copy each of membrane proteins PsbA, PsbB, PsbC, PsbD, PsbE, PsbF, PsbH, PsbI, PsbJ, PsbK, PsbL, PsbM, PsbT, PsbX, PsbY, Psb30/Ycf12, peripheral proteins PsbO, CyanoQ (PsbQ), PsbU, PsbV and a large number of cofactors. It forms dimeric complexes.

It is found in the cellular thylakoid membrane. In terms of biological role, one of the components of the core complex of photosystem II (PSII). PSII is a light-driven water:plastoquinone oxidoreductase that uses light energy to abstract electrons from H(2)O, generating O(2) and a proton gradient subsequently used for ATP formation. It consists of a core antenna complex that captures photons, and an electron transfer chain that converts photonic excitation into a charge separation. This subunit is found at the monomer-monomer interface. This Prochlorococcus marinus (strain MIT 9312) protein is Photosystem II reaction center protein M.